Reading from the N-terminus, the 270-residue chain is Mlc titration factor A (270 aa).

Residues His-111, His-148, His-152, and Glu-211 each coordinate Zn(2+).

Belongs to the MtfA family. As to quaternary structure, interacts with Mlc. The cofactor is Zn(2+).

The protein resides in the cytoplasm. Its function is as follows. Involved in the modulation of the activity of the glucose-phosphotransferase system (glucose-PTS). Interacts with the transcriptional repressor Mlc, preventing its interaction with DNA and leading to the modulation of expression of genes regulated by Mlc, including ptsG, which encodes the PTS system glucose-specific EIICB component. In terms of biological role, shows zinc-dependent metallopeptidase activity. The chain is Mlc titration factor A from Yersinia pestis bv. Antiqua (strain Nepal516).